We begin with the raw amino-acid sequence, 447 residues long: MGRESLAVVSSPPSATAPSTAVSATSLAPGFRFHPTDEELVSYYLKRKVLGKPVRFDAIGEVDIYKHEPWDLAVFSKLKTRDQEWYFFSALDKKYGNGARMNRATNKGYWKATGKDREIRRDIQLLGMKKTLVFHSGRAPDGLRTNWVMHEYRLVEYETETNGSLLQDAYVLCRVFHKNNIGPPSGNRYAPFMEEEWADGGGALIPGIDVRVRVEALPQANGNNQMDQEMHSASKDLININELPRDATPMDIEPNQQNHHESAFKPQESNNHSGYEEDEDTLKREHAEEDERPPSLCILNKEAPLPLLQYKRRRQNESNNNSSRNTQDHCSSTITTVDNTTTLISSSAAAATNTAISALLEFSLMGISDKKENQQKEETSPPSPIASPEEKVNDLQKEVHQMSVERETFKLEMMSAEAMISILQSRIDALRQENEELKKKNASGQAS.

Residues 1–21 form a disordered region; it reads MGRESLAVVSSPPSATAPSTA. An NAC domain is found at 27–178; the sequence is LAPGFRFHPT…AYVLCRVFHK (152 aa). The DNA-binding element occupies 126–184; that stretch reads LGMKKTLVFHSGRAPDGLRTNWVMHEYRLVEYETETNGSLLQDAYVLCRVFHKNNIGPP. 2 disordered regions span residues 246 to 303 and 371 to 392; these read DATP…NKEA and KENQQKEETSPPSPIASPEEKV. Residues 281 to 293 show a composition bias toward basic and acidic residues; that stretch reads TLKREHAEEDERP. A coiled-coil region spans residues 392 to 447; sequence VNDLQKEVHQMSVERETFKLEMMSAEAMISILQSRIDALRQENEELKKKNASGQAS.

In terms of assembly, interacts with JMJ14 and NAC052. In terms of tissue distribution, mostly expressed in floral organs, and, at low levels, in other organs.

It localises to the nucleus. In terms of biological role, transcriptional repressor that binds to the motif 5'-(C/T)A(C/A)G-3' in the promoter of target genes. Also binds to the 5'-CTTGNNNNNCAAG-3' consensus sequence in chromatin. Can bind to the mitochondrial dysfunction motif (MDM) present in the upstream regions of mitochondrial dysfunction stimulon (MDS) genes involved in mitochondrial retrograde regulation (MRR). Together with NAC051/NAC052 and JMJ14, regulates gene expression and flowering time by associating with the histone demethylase JMJ14, probably by the promotion of RNA-mediated gene silencing. In Arabidopsis thaliana (Mouse-ear cress), this protein is NAC domain containing protein 50.